Reading from the N-terminus, the 564-residue chain is Kelch repeat and BTB domain-containing protein 1 (564 aa).

The 68-residue stretch at 21–88 (CDINIVINDE…IYGIPLSLTN (68 aa)) folds into the BTB domain. One can recognise a BACK domain in the interval 123–219 (CIDFYIYADK…SLLSPQVIKS (97 aa)). Kelch repeat units follow at residues 252–297 (IELI…VLDN), 298–346 (IIYM…ADDE), 347–395 (YIYC…MLNG), 397–441 (IYVI…VHDG), 442–492 (KIYI…SAHN), and 494–539 (LYVG…CEPI).

Interacts (via BTB domain) with host CUL3.

The protein resides in the host cytoplasm. Its function is as follows. Probable substrate-specific adapter of CUL3-containing E3 ubiquitin-protein ligases which mediate the ubiquitination and subsequent proteasomal degradation of host target proteins. The polypeptide is Kelch repeat and BTB domain-containing protein 1 (KBTB1) (Cowpox virus (strain GRI-90 / Grishak) (CPV)).